A 398-amino-acid chain; its full sequence is 1-deoxy-D-xylulose 5-phosphate reductoisomerase (398 aa).

T28, G29, S30, I31, G54, N57, and N135 together coordinate NADPH. A 1-deoxy-D-xylulose 5-phosphate-binding site is contributed by K136. E137 lines the NADPH pocket. D159 contacts Mn(2+). Residues S160, E161, S185, and H208 each contribute to the 1-deoxy-D-xylulose 5-phosphate site. E161 contributes to the Mn(2+) binding site. G214 contributes to the NADPH binding site. 1-deoxy-D-xylulose 5-phosphate contacts are provided by S221, N226, K227, and E230. E230 serves as a coordination point for Mn(2+).

It belongs to the DXR family. Requires Mg(2+) as cofactor. Mn(2+) serves as cofactor.

It catalyses the reaction 2-C-methyl-D-erythritol 4-phosphate + NADP(+) = 1-deoxy-D-xylulose 5-phosphate + NADPH + H(+). It participates in isoprenoid biosynthesis; isopentenyl diphosphate biosynthesis via DXP pathway; isopentenyl diphosphate from 1-deoxy-D-xylulose 5-phosphate: step 1/6. Functionally, catalyzes the NADPH-dependent rearrangement and reduction of 1-deoxy-D-xylulose-5-phosphate (DXP) to 2-C-methyl-D-erythritol 4-phosphate (MEP). The protein is 1-deoxy-D-xylulose 5-phosphate reductoisomerase of Rhodococcus jostii (strain RHA1).